A 979-amino-acid polypeptide reads, in one-letter code: UPF0182 protein Rv0064 (979 aa).

Helical transmembrane passes span 19–41 (LVTA…DIYV), 63–85 (LAIV…LLAY), 114–136 (LFGW…FDWV), 174–196 (WLFV…FGGL), 208–230 (AARV…AYWL), 261–280 (LVLV…AIFL), and 285–307 (IPAM…WPLL). Residues 898 to 948 (GTGRVATARGGDAASAPPPGAGGPAPPQAVPPPRTTQPPAAPPRGPDVPPA) form a disordered region. The segment covering 913-946 (APPPGAGGPAPPQAVPPPRTTQPPAAPPRGPDVP) has biased composition (pro residues).

It belongs to the UPF0182 family.

It localises to the cell membrane. This is UPF0182 protein Rv0064 from Mycobacterium tuberculosis (strain ATCC 25618 / H37Rv).